Reading from the N-terminus, the 757-residue chain is Polyribonucleotide nucleotidyltransferase (757 aa).

The Mg(2+) site is built by aspartate 531 and aspartate 537. Positions proline 597–isoleucine 656 constitute a KH domain. The 70-residue stretch at glycine 668 to valine 737 folds into the S1 motif domain.

This sequence belongs to the polyribonucleotide nucleotidyltransferase family. Requires Mg(2+) as cofactor.

It localises to the cytoplasm. It carries out the reaction RNA(n+1) + phosphate = RNA(n) + a ribonucleoside 5'-diphosphate. Involved in mRNA degradation. Catalyzes the phosphorolysis of single-stranded polyribonucleotides processively in the 3'- to 5'-direction. The sequence is that of Polyribonucleotide nucleotidyltransferase from Mycolicibacterium paratuberculosis (strain ATCC BAA-968 / K-10) (Mycobacterium paratuberculosis).